The primary structure comprises 417 residues: Cobalamin binding intrinsic factor (417 aa).

A signal peptide spans 1–18 (MAWLSFYLLNVLWAVAGT). 3 disulfides stabilise this stretch: Cys-26–Cys-246, Cys-103–Cys-288, and Cys-143–Cys-182. Residue Asp-171 coordinates cob(II)alamin. The residue at position 191 (Ser-191) is a Phosphoserine. Residue Asn-209 is glycosylated (N-linked (GlcNAc...) asparagine). The cob(II)alamin site is built by Asp-222 and Gln-270. Residues Asn-311 and Asn-330 are each glycosylated (N-linked (GlcNAc...) asparagine). Cob(II)alamin is bound by residues 365–370 (SWGLIV) and 386–395 (WEFLSGKTPL). An N-linked (GlcNAc...) asparagine glycan is attached at Asn-413.

Belongs to the eukaryotic cobalamin transport proteins family. As to quaternary structure, interacts with CUBN (via CUB domains). Post-translationally, the N-terminus is blocked. As to expression, gastric mucosa.

The protein resides in the secreted. In terms of biological role, promotes absorption of the essential vitamin cobalamin (Cbl) in the ileum. After interaction with CUBN, the CBLIF-cobalamin complex is internalized via receptor-mediated endocytosis. This chain is Cobalamin binding intrinsic factor, found in Rattus norvegicus (Rat).